The following is a 342-amino-acid chain: Holliday junction branch migration complex subunit RuvB (342 aa).

Positions 1-184 are large ATPase domain (RuvB-L); that stretch reads MEEDFNIRDH…FGINLHLEYY (184 aa). ATP is bound by residues Leu23, Arg24, Gly65, Lys68, Thr69, Thr70, 131–133, Arg174, Tyr184, and Arg221; that span reads EDY. Thr69 lines the Mg(2+) pocket. Residues 185–255 form a small ATPAse domain (RuvB-S) region; it reads DDDILSNIIS…IANYALEALN (71 aa). The head domain (RuvB-H) stretch occupies residues 258–342; sequence KYGLDEIDNK…YNSQKTLFND (85 aa). DNA-binding residues include Arg313 and Arg318.

It belongs to the RuvB family. As to quaternary structure, homohexamer. Forms an RuvA(8)-RuvB(12)-Holliday junction (HJ) complex. HJ DNA is sandwiched between 2 RuvA tetramers; dsDNA enters through RuvA and exits via RuvB. An RuvB hexamer assembles on each DNA strand where it exits the tetramer. Each RuvB hexamer is contacted by two RuvA subunits (via domain III) on 2 adjacent RuvB subunits; this complex drives branch migration. In the full resolvosome a probable DNA-RuvA(4)-RuvB(12)-RuvC(2) complex forms which resolves the HJ.

It is found in the cytoplasm. The enzyme catalyses ATP + H2O = ADP + phosphate + H(+). In terms of biological role, the RuvA-RuvB-RuvC complex processes Holliday junction (HJ) DNA during genetic recombination and DNA repair, while the RuvA-RuvB complex plays an important role in the rescue of blocked DNA replication forks via replication fork reversal (RFR). RuvA specifically binds to HJ cruciform DNA, conferring on it an open structure. The RuvB hexamer acts as an ATP-dependent pump, pulling dsDNA into and through the RuvAB complex. RuvB forms 2 homohexamers on either side of HJ DNA bound by 1 or 2 RuvA tetramers; 4 subunits per hexamer contact DNA at a time. Coordinated motions by a converter formed by DNA-disengaged RuvB subunits stimulates ATP hydrolysis and nucleotide exchange. Immobilization of the converter enables RuvB to convert the ATP-contained energy into a lever motion, pulling 2 nucleotides of DNA out of the RuvA tetramer per ATP hydrolyzed, thus driving DNA branch migration. The RuvB motors rotate together with the DNA substrate, which together with the progressing nucleotide cycle form the mechanistic basis for DNA recombination by continuous HJ branch migration. Branch migration allows RuvC to scan DNA until it finds its consensus sequence, where it cleaves and resolves cruciform DNA. In Bacteroides fragilis (strain ATCC 25285 / DSM 2151 / CCUG 4856 / JCM 11019 / LMG 10263 / NCTC 9343 / Onslow / VPI 2553 / EN-2), this protein is Holliday junction branch migration complex subunit RuvB.